A 217-amino-acid polypeptide reads, in one-letter code: Elongation factor Ts (217 aa).

The segment at 82–85 is involved in Mg(2+) ion dislocation from EF-Tu; sequence TDFV.

It belongs to the EF-Ts family.

The protein resides in the cytoplasm. Functionally, associates with the EF-Tu.GDP complex and induces the exchange of GDP to GTP. It remains bound to the aminoacyl-tRNA.EF-Tu.GTP complex up to the GTP hydrolysis stage on the ribosome. This is Elongation factor Ts from Prochlorococcus marinus (strain SARG / CCMP1375 / SS120).